Consider the following 334-residue polypeptide: MLNTLIVGASGYAGAELTAYLNRHPHMNITGLAVSAQSADAGKLLSDLHPQLKGILDLPLQPLVDVAQAAKGIDVVFLATAHEVSHDLAPQFLAAGCVVFDLSGAFRVRDAAFYSQYYGFEHQHPDWLDKAVYGLAEWQSEDIKQAQLIAVPGCYPTASQLALKPLVDGQLLNDAQWPVINAVSGVSGAGRKASMGNSFCEVSLQPYGLFTHRHQPEIVTHLGTPVIFTPHLGNFARGILATITCRLKAGVTAQNIADAYHHAYQNKPLVRLYQQGVPALKAVVGLPFCDIGFSVQGEHLIIVATEDNLLKGAAAQAVQCMNIRFGFPETQSLL.

C154 is a catalytic residue.

The protein belongs to the NAGSA dehydrogenase family. Type 1 subfamily.

The protein resides in the cytoplasm. The catalysed reaction is N-acetyl-L-glutamate 5-semialdehyde + phosphate + NADP(+) = N-acetyl-L-glutamyl 5-phosphate + NADPH + H(+). Its pathway is amino-acid biosynthesis; L-arginine biosynthesis; N(2)-acetyl-L-ornithine from L-glutamate: step 3/4. Functionally, catalyzes the NADPH-dependent reduction of N-acetyl-5-glutamyl phosphate to yield N-acetyl-L-glutamate 5-semialdehyde. This is N-acetyl-gamma-glutamyl-phosphate reductase from Yersinia pestis.